The chain runs to 398 residues: Minor cardiolipin synthase ClsB (398 aa).

Residues 3–23 (VFIVIMIIVVIFFALILLDIF) form a helical membrane-spanning segment. PLD phosphodiesterase domains follow at residues 141–168 (MQKRNHRKITVIDGKIGYIGGFNIAEEY) and 311–338 (YQGFYHVKALIIDDHLSIIGTANFDKRS).

Belongs to the phospholipase D family. Cardiolipin synthase subfamily.

Its subcellular location is the cell membrane. Its function is as follows. Involved in the biosynthesis of cardiolipin. The protein is Minor cardiolipin synthase ClsB (clsB) of Bacillus subtilis (strain 168).